We begin with the raw amino-acid sequence, 344 residues long: Plastoglobule-localized metallopeptidase 48, chloroplastic (344 aa).

The N-terminal 47 residues, 1 to 47 (MAVSVSAPVLSLCYNQSGELSRSLGYRLPKKVGFSSGRRSVSYIGFG), are a transit peptide targeting the chloroplast. A run of 2 helical transmembrane segments spans residues 102-122 (LLGS…SVLV) and 169-189 (FIVV…QAVL). His191 contributes to the Zn(2+) binding site. Residue Glu192 is part of the active site. His195 serves as a coordination point for Zn(2+). The helical transmembrane segment at 201 to 221 (GVWLTFANILTLGAYTVPAFG) threads the bilayer. Glu240 contributes to the Zn(2+) binding site. Residues 256-272 (VVVSVLMKLAGGCPSIA) form a helical membrane-spanning segment.

Belongs to the peptidase M48 family. M48D subfamily. Interacts with plastoglobule (PG) core proteins ABC1K3, PES1 and CCD4. Zn(2+) is required as a cofactor. As to expression, mostly expressed in flowers (e.g. sepals, petals and stamen), seeds, leaves and cotyledons.

The protein localises to the plastid. The protein resides in the chloroplast. It is found in the plastoglobule. Its subcellular location is the chloroplast membrane. Functionally, metalloendopeptidase with a Zn-dependent proteolytic activity and substrate cleavage upstream of hydrophobic residues. Positive regulator of senescence, probably by degrading CCD4, thus participating in the controlled removal of carotenoids from the thylakoid membrane during the senescence process. The polypeptide is Plastoglobule-localized metallopeptidase 48, chloroplastic (Arabidopsis thaliana (Mouse-ear cress)).